A 168-amino-acid chain; its full sequence is MAILNILEFPDSRLRTLAKPVAMVDDGIRQLVDDMFETMYEAPGIGLAATQVNVHKRVVVMDLSEDRSAPMVFINPEIEKLTDEMDQYQEGCLSVPGFYENVDRPQKVRVKALDRDGKPYELVAEGLLAICIQHECDHLNGKLFVDYLSNLKRDRIKKKLEKQHKLNA.

Positions 92 and 134 each coordinate Fe cation. Glu-135 is a catalytic residue. Residue His-138 participates in Fe cation binding.

The protein belongs to the polypeptide deformylase family. The cofactor is Fe(2+).

It carries out the reaction N-terminal N-formyl-L-methionyl-[peptide] + H2O = N-terminal L-methionyl-[peptide] + formate. In terms of biological role, removes the formyl group from the N-terminal Met of newly synthesized proteins. Requires at least a dipeptide for an efficient rate of reaction. N-terminal L-methionine is a prerequisite for activity but the enzyme has broad specificity at other positions. This is Peptide deformylase 1 from Pseudomonas syringae pv. tomato (strain ATCC BAA-871 / DC3000).